Here is a 166-residue protein sequence, read N- to C-terminus: Zinc finger CCHC domain-containing protein 13 (166 aa).

Residues 4–21 form a CCHC-type 1; degenerate zinc finger; sequence KDFFACGHSGHWARGCPR. A CCHC-type 2; degenerate zinc finger spans residues 45-62; it reads YTCYCCGESGRNAKNCVL. 4 CCHC-type zinc fingers span residues 65 to 82, 89 to 106, 110 to 127, and 128 to 145; these read NICYNCGRSGHIAKDCKD, QHCYTCGRLGHLARDCDR, QKCYSCGKLGHIQKDCAQ, and VKCYRCGEIGHVAINCSK.

The chain is Zinc finger CCHC domain-containing protein 13 (ZCCHC13) from Homo sapiens (Human).